We begin with the raw amino-acid sequence, 153 residues long: Ribosome maturation factor RimP (153 aa).

Belongs to the RimP family.

Its subcellular location is the cytoplasm. In terms of biological role, required for maturation of 30S ribosomal subunits. This is Ribosome maturation factor RimP from Clostridium tetani (strain Massachusetts / E88).